A 321-amino-acid polypeptide reads, in one-letter code: MVNLTSMSGFLLMGFSDERKLQILHALVFLVTYLLALTGNLLIITIITVDRRLHSPMYYFLKHLSLLDLCFISVTVPQSIANSLMGNGYISLVQCILQVFFFIALASSEVAILTVMSYDRYAAICQPLHYETIMDPRACRHAVIAVWIAGGLSGLMHAAINFSIPLCGKRVIHQFFCDVPQMLKLACSYEFINEIALAAFTTSAAFICLISIVLSYIRIFSTVLRIPSAEGRTKVFSTCLPHLFVATFFLSAAGFEFLRLPSDSSSTVDLVFSVFYTVIPPTLNPVIYSLRNDSMKAALRKMLSKEELPQRKMCLKAMFKL.

At 1–23 (MVNLTSMSGFLLMGFSDERKLQI) the chain is on the extracellular side. N-linked (GlcNAc...) asparagine glycosylation occurs at asparagine 3. The helical transmembrane segment at 24 to 44 (LHALVFLVTYLLALTGNLLII) threads the bilayer. Residues 45-52 (TIITVDRR) are Cytoplasmic-facing. The helical transmembrane segment at 53–73 (LHSPMYYFLKHLSLLDLCFIS) threads the bilayer. The Extracellular segment spans residues 74–97 (VTVPQSIANSLMGNGYISLVQCIL). Cysteines 95 and 187 form a disulfide. The chain crosses the membrane as a helical span at residues 98-118 (QVFFFIALASSEVAILTVMSY). The Cytoplasmic segment spans residues 119–137 (DRYAAICQPLHYETIMDPR). The chain crosses the membrane as a helical span at residues 138 to 158 (ACRHAVIAVWIAGGLSGLMHA). The Extracellular portion of the chain corresponds to 159-194 (AINFSIPLCGKRVIHQFFCDVPQMLKLACSYEFINE). A helical transmembrane segment spans residues 195–215 (IALAAFTTSAAFICLISIVLS). Residues 216-235 (YIRIFSTVLRIPSAEGRTKV) lie on the Cytoplasmic side of the membrane. The helical transmembrane segment at 236–256 (FSTCLPHLFVATFFLSAAGFE) threads the bilayer. Topologically, residues 257 to 269 (FLRLPSDSSSTVD) are extracellular. Residues 270–290 (LVFSVFYTVIPPTLNPVIYSL) traverse the membrane as a helical segment. The Cytoplasmic segment spans residues 291-321 (RNDSMKAALRKMLSKEELPQRKMCLKAMFKL).

This sequence belongs to the G-protein coupled receptor 1 family.

It is found in the cell membrane. Its function is as follows. Odorant receptor. The polypeptide is Olfactory receptor 14J1 (OR14J1) (Homo sapiens (Human)).